Consider the following 424-residue polypeptide: Glutamyl-tRNA reductase (424 aa).

Substrate-binding positions include 49-52, Ser-107, 112-114, and Gln-118; these read TCNR and EPQ. Cys-50 (nucleophile) is an active-site residue. 187 to 192 is an NADP(+) binding site; that stretch reads GAGETI.

This sequence belongs to the glutamyl-tRNA reductase family. Homodimer.

The enzyme catalyses (S)-4-amino-5-oxopentanoate + tRNA(Glu) + NADP(+) = L-glutamyl-tRNA(Glu) + NADPH + H(+). It participates in porphyrin-containing compound metabolism; protoporphyrin-IX biosynthesis; 5-aminolevulinate from L-glutamyl-tRNA(Glu): step 1/2. In terms of biological role, catalyzes the NADPH-dependent reduction of glutamyl-tRNA(Glu) to glutamate 1-semialdehyde (GSA). This Chromohalobacter salexigens (strain ATCC BAA-138 / DSM 3043 / CIP 106854 / NCIMB 13768 / 1H11) protein is Glutamyl-tRNA reductase.